Reading from the N-terminus, the 350-residue chain is Histidinol-phosphate aminotransferase (350 aa).

K209 carries the post-translational modification N6-(pyridoxal phosphate)lysine.

The protein belongs to the class-II pyridoxal-phosphate-dependent aminotransferase family. Histidinol-phosphate aminotransferase subfamily. In terms of assembly, homodimer. Pyridoxal 5'-phosphate serves as cofactor.

It catalyses the reaction L-histidinol phosphate + 2-oxoglutarate = 3-(imidazol-4-yl)-2-oxopropyl phosphate + L-glutamate. Its pathway is amino-acid biosynthesis; L-histidine biosynthesis; L-histidine from 5-phospho-alpha-D-ribose 1-diphosphate: step 7/9. This is Histidinol-phosphate aminotransferase from Geobacter sp. (strain M21).